Consider the following 1124-residue polypeptide: DNA-directed RNA polymerase subunit Rpo2 (1124 aa).

Zn(2+) contacts are provided by C1061, C1064, C1079, and H1082.

The protein belongs to the RNA polymerase beta chain family. In terms of assembly, part of the 13-subunit RNA polymerase complex. The cofactor is Zn(2+).

It is found in the cytoplasm. It carries out the reaction RNA(n) + a ribonucleoside 5'-triphosphate = RNA(n+1) + diphosphate. Functionally, DNA-dependent RNA polymerase (RNAP) catalyzes the transcription of DNA into RNA using the four ribonucleoside triphosphates as substrates. This subunit is involved in DNA promoter recognition. This is DNA-directed RNA polymerase subunit Rpo2 from Saccharolobus solfataricus (strain ATCC 35092 / DSM 1617 / JCM 11322 / P2) (Sulfolobus solfataricus).